Reading from the N-terminus, the 142-residue chain is Relaxin-3 (142 aa).

An N-terminal signal peptide occupies residues 1–25 (MARYKLLLLLAVWVLTGELWPGAEA). 3 cysteine pairs are disulfide-bonded: C35/C129, C47/C142, and C128/C133. The propeptide at 55–118 (SDILAHEAMG…GTPGALRGSR (64 aa)) is connecting peptide.

The protein belongs to the insulin family. In terms of assembly, heterodimer of a B chain and an A chain linked by two disulfide bonds.

It localises to the secreted. May play a role in neuropeptide signaling processes. Ligand for LGR7, RXFP3 and RXFP4. The polypeptide is Relaxin-3 (RLN3) (Pan troglodytes (Chimpanzee)).